A 450-amino-acid polypeptide reads, in one-letter code: Molybdate-anion transporter (450 aa).

A run of 12 helical transmembrane segments spans residues 1 to 21, 43 to 63, 79 to 99, 128 to 148, 174 to 194, 195 to 215, 249 to 269, 278 to 298, 311 to 331, 344 to 364, 376 to 396, and 409 to 429; these read MLVT…GLEL, LDFY…APYL, ILYV…SSLV, FVLL…FSAF, AAFW…AVAS, WIGL…ALAG, VLLL…FVFL, GAPL…GSSL, PMHL…MLTF, FIAF…MSFL, GVLN…LLVL, and FSIC…LFTV.

Belongs to the major facilitator superfamily.

It is found in the cell membrane. Its function is as follows. Mediates high-affinity intracellular uptake of the rare oligo-element molybdenum. This is Molybdate-anion transporter (MFSD5) from Pongo abelii (Sumatran orangutan).